Reading from the N-terminus, the 293-residue chain is MMRIALFLLTNLAVMVVFGLVLSLTGIQSSSVQGLLIMALLFGFGGSFISLLMSKWMALKSVGGEVIEQPRNDMEHWLMNTVAQQSRQAGIKMPQVAIYHAPDINAFATGARRDASLVAVSTGLLQNMSRDEAEAVIAHEISHIANGDMVTMTLIQGVVNTFVIFISRILAQIAAGFMGGNRDEGEGNNGNPLIYFAVAMVLELVFGILASIITMWFSRHREFHADAGSAKLVGREKMIAALQRLKTSYEPQEATSMMAFCINGKSKSLSEMFMTHPPLDKRIEALRSGQYIK.

2 consecutive transmembrane segments (helical) span residues 4 to 24 (IALF…VLSL) and 34 to 54 (GLLI…LLMS). Position 139 (His139) interacts with Zn(2+). Glu140 is an active-site residue. His143 contacts Zn(2+). Helical transmembrane passes span 158–178 (VVNT…AGFM) and 193–213 (LIYF…ASII). Glu222 contacts Zn(2+).

This sequence belongs to the peptidase M48B family. Requires Zn(2+) as cofactor.

It localises to the cell inner membrane. The polypeptide is Protease HtpX (Enterobacter sp. (strain 638)).